A 275-amino-acid chain; its full sequence is Protein MGF 110-11L (275 aa).

Residues 5 to 25 (LGLLLGYSVLILTHELPDLSA) form a helical membrane-spanning segment. Asparagine 61 carries an N-linked (GlcNAc...) asparagine; by host glycan. Helical transmembrane passes span 127 to 147 (HCCF…FAYH) and 149 to 169 (NLHL…IWLS).

The protein belongs to the asfivirus MGF 110 family.

It is found in the host membrane. Plays a role in virus cell tropism, and may be required for efficient virus replication in macrophages. The protein is Protein MGF 110-11L of African swine fever virus (isolate Pig/Kenya/KEN-50/1950) (ASFV).